We begin with the raw amino-acid sequence, 610 residues long: E-selectin (610 aa).

The signal sequence occupies residues 1–21; that stretch reads MIASQFLSALTLVLLIKESGA. A C-type lectin domain is found at 22 to 138; that stretch reads WSYSASTTNM…CNKKKLALCY (117 aa). At 22–555 the chain is on the extracellular side; the sequence is WSYSASTTNM…CEATAKSNIP (534 aa). An N-linked (GlcNAc...) asparagine glycan is attached at asparagine 30. Cystine bridges form between cysteine 40–cysteine 137, cysteine 110–cysteine 129, cysteine 142–cysteine 153, cysteine 147–cysteine 162, cysteine 164–cysteine 173, cysteine 179–cysteine 223, cysteine 192–cysteine 205, cysteine 209–cysteine 236, cysteine 241–cysteine 285, cysteine 254–cysteine 267, cysteine 271–cysteine 298, cysteine 303–cysteine 348, cysteine 334–cysteine 361, cysteine 366–cysteine 411, cysteine 397–cysteine 424, cysteine 429–cysteine 474, cysteine 460–cysteine 487, cysteine 492–cysteine 533, and cysteine 519–cysteine 546. Residues glutamate 101, asparagine 103, and glutamate 108 each coordinate Ca(2+). Residues 101–108, 112–117, and 125–127 contribute to the a carbohydrate site; these read EPNNKQNE, EIYIKR, and NDE. Ca(2+) is bound by residues asparagine 125 and aspartate 126. In terms of domain architecture, EGF-like spans 139–174; it reads TAACTHTSCSGHGECVETINNYTCQCHPGFTGLRCE. Residue asparagine 159 is glycosylated (N-linked (GlcNAc...) asparagine). Sushi domains follow at residues 177–238, 239–300, 314–363, 365–426, 428–489, and 490–548; these read VTCQ…ACHV, VECD…TCKA, VNCS…VCKA, QCKA…TCEA, RCDA…SCQV, and VQCA…TCEA. N-linked (GlcNAc...) asparagine glycosylation is found at asparagine 198 and asparagine 202. An N-linked (GlcNAc...) asparagine glycan is attached at asparagine 264. N-linked (GlcNAc...) asparagine glycans are attached at residues asparagine 315, asparagine 327, and asparagine 331. Asparagine 526 carries an N-linked (GlcNAc...) asparagine glycan. The chain crosses the membrane as a helical span at residues 556–577; sequence LTVGLSAAGTSLLTLASFLFWL. Residues 578 to 610 are Cytoplasmic-facing; the sequence is LKRLRRKAKKFVPASSYQSLQSDGSYQMPSESA.

This sequence belongs to the selectin/LECAM family. As to quaternary structure, interacts with SELPLG/PSGL1 and PODXL2 through the sialyl Lewis X epitope. SELPLG sulfation appears not to be required for this interaction.

Its subcellular location is the cell membrane. In terms of biological role, cell-surface glycoprotein having a role in immunoadhesion. Mediates in the adhesion of blood neutrophils in cytokine-activated endothelium through interaction with SELPLG/PSGL1. May have a role in capillary morphogenesis. The sequence is that of E-selectin (SELE) from Equus caballus (Horse).